Here is a 37-residue protein sequence, read N- to C-terminus: Potassium channel toxin alpha-KTx 1.13 (37 aa).

The residue at position 1 (glutamine 1) is a Pyrrolidone carboxylic acid. 3 cysteine pairs are disulfide-bonded: cysteine 7–cysteine 28, cysteine 13–cysteine 33, and cysteine 17–cysteine 35. The tract at residues 26–33 (GKCMNKKC) is interaction with Ca(2+)-activated K(+) channels.

It belongs to the short scorpion toxin superfamily. Potassium channel inhibitor family. Alpha-KTx 01 subfamily. Expressed by the venom gland.

It is found in the secreted. Functionally, potent selective inhibitor of high conductance (maxi-K), different medium and small conductance calcium-activated potassium channels (KCa1.1/KCNMA1 and others), as well as a voltage-dependent potassium channel (Kv1.3/KCNA3&gt;Kv1.2/KCNA2&gt;Kv1.6/KCNA3&gt;&gt;Shaker/Sh). It blocks channel activity by a simple bimolecular inhibition process. Its function is as follows. Has a pH-specific antimicrobial activity against bacteria (B.subtilis, E.coli and S.aureus) and the fungus C.albicans. This chain is Potassium channel toxin alpha-KTx 1.13, found in Leiurus hebraeus (Hebrew deathstalker scorpion).